We begin with the raw amino-acid sequence, 158 residues long: Peptide methionine sulfoxide reductase MsrA (158 aa).

Cysteine 10 is an active-site residue.

The protein belongs to the MsrA Met sulfoxide reductase family.

It catalyses the reaction L-methionyl-[protein] + [thioredoxin]-disulfide + H2O = L-methionyl-(S)-S-oxide-[protein] + [thioredoxin]-dithiol. It carries out the reaction [thioredoxin]-disulfide + L-methionine + H2O = L-methionine (S)-S-oxide + [thioredoxin]-dithiol. In terms of biological role, has an important function as a repair enzyme for proteins that have been inactivated by oxidation. Catalyzes the reversible oxidation-reduction of methionine sulfoxide in proteins to methionine. The sequence is that of Peptide methionine sulfoxide reductase MsrA from Alkaliphilus metalliredigens (strain QYMF).